The primary structure comprises 212 residues: Probable nicotinate-nucleotide adenylyltransferase (212 aa).

This sequence belongs to the NadD family.

It catalyses the reaction nicotinate beta-D-ribonucleotide + ATP + H(+) = deamido-NAD(+) + diphosphate. It functions in the pathway cofactor biosynthesis; NAD(+) biosynthesis; deamido-NAD(+) from nicotinate D-ribonucleotide: step 1/1. Functionally, catalyzes the reversible adenylation of nicotinate mononucleotide (NaMN) to nicotinic acid adenine dinucleotide (NaAD). The sequence is that of Probable nicotinate-nucleotide adenylyltransferase from Mycobacterium avium (strain 104).